A 374-amino-acid polypeptide reads, in one-letter code: Putative C-&gt;U-editing enzyme APOBEC-4 (374 aa).

The CMP/dCMP-type deaminase domain occupies 60–176; it reads PQTKHLTFYE…AWNRKALQSL (117 aa). His92 lines the Zn(2+) pocket. Glu94 acts as the Proton donor in catalysis. Zn(2+) is bound by residues Cys126 and Cys133. Residues 259–280 are disordered; sequence EKHPLGSAAPAQRQPTRGQDPR.

The protein belongs to the cytidine and deoxycytidylate deaminase family. Requires Zn(2+) as cofactor. In terms of tissue distribution, predominantly expressed in testis.

Putative C to U editing enzyme whose physiological substrate is not yet known. This chain is Putative C-&gt;U-editing enzyme APOBEC-4 (Apobec4), found in Mus musculus (Mouse).